The primary structure comprises 473 residues: 3-isopropylmalate dehydratase large subunit (473 aa).

[4Fe-4S] cluster-binding residues include Cys-353, Cys-414, and Cys-417.

The protein belongs to the aconitase/IPM isomerase family. LeuC type 1 subfamily. In terms of assembly, heterodimer of LeuC and LeuD. [4Fe-4S] cluster is required as a cofactor.

The catalysed reaction is (2R,3S)-3-isopropylmalate = (2S)-2-isopropylmalate. It functions in the pathway amino-acid biosynthesis; L-leucine biosynthesis; L-leucine from 3-methyl-2-oxobutanoate: step 2/4. Catalyzes the isomerization between 2-isopropylmalate and 3-isopropylmalate, via the formation of 2-isopropylmaleate. The chain is 3-isopropylmalate dehydratase large subunit from Cellvibrio japonicus (strain Ueda107) (Pseudomonas fluorescens subsp. cellulosa).